The chain runs to 284 residues: 2-dehydro-3-deoxyphosphooctonate aldolase (284 aa).

It belongs to the KdsA family.

The protein localises to the cytoplasm. It carries out the reaction D-arabinose 5-phosphate + phosphoenolpyruvate + H2O = 3-deoxy-alpha-D-manno-2-octulosonate-8-phosphate + phosphate. The protein operates within carbohydrate biosynthesis; 3-deoxy-D-manno-octulosonate biosynthesis; 3-deoxy-D-manno-octulosonate from D-ribulose 5-phosphate: step 2/3. It participates in bacterial outer membrane biogenesis; lipopolysaccharide biosynthesis. In Aliivibrio salmonicida (strain LFI1238) (Vibrio salmonicida (strain LFI1238)), this protein is 2-dehydro-3-deoxyphosphooctonate aldolase.